Here is a 1677-residue protein sequence, read N- to C-terminus: Pentafunctional AROM polypeptide (1677 aa).

A 3-dehydroquinate synthase region spans residues Met1–Asp394. Residues Asp50–Asn52, Glu89–Lys92, Gly120–Val122, and Asp125 contribute to the NAD(+) site. Arg136 lines the 7-phospho-2-dehydro-3-deoxy-D-arabino-heptonate pocket. Thr145–Thr146 is a binding site for NAD(+). 7-phospho-2-dehydro-3-deoxy-D-arabino-heptonate-binding residues include Asp152 and Lys158. Lys167 contacts NAD(+). Asn168 contributes to the 7-phospho-2-dehydro-3-deoxy-D-arabino-heptonate binding site. Residues Tyr185–Thr188 and Asn196 contribute to the NAD(+) site. Glu200 contacts Zn(2+). Residues Glu200–Lys203 and Lys260 contribute to the 7-phospho-2-dehydro-3-deoxy-D-arabino-heptonate site. Catalysis depends on Glu270, which acts as the Proton acceptor; for 3-dehydroquinate synthase activity. Residues Arg274–Asn278 and His281 contribute to the 7-phospho-2-dehydro-3-deoxy-D-arabino-heptonate site. Zn(2+) is bound at residue His281. His285 acts as the Proton acceptor; for 3-dehydroquinate synthase activity in catalysis. The 7-phospho-2-dehydro-3-deoxy-D-arabino-heptonate site is built by His297 and Lys366. His297 provides a ligand contact to Zn(2+). The tract at residues Val407–Ile858 is EPSP synthase. Cys840 functions as the For EPSP synthase activity in the catalytic mechanism. Residues Asn885–Cys1113 are shikimate kinase. Residue Gly892 to Thr899 participates in ATP binding. The segment at Leu1114–Gln1341 is 3-dehydroquinase. His1243 functions as the Proton acceptor; for 3-dehydroquinate dehydratase activity in the catalytic mechanism. The active-site Schiff-base intermediate with substrate; for 3-dehydroquinate dehydratase activity is the Lys1271. The tract at residues Ser1354–Val1677 is shikimate dehydrogenase.

In the N-terminal section; belongs to the sugar phosphate cyclases superfamily. Dehydroquinate synthase family. This sequence in the 2nd section; belongs to the EPSP synthase family. It in the 3rd section; belongs to the shikimate kinase family. The protein in the 4th section; belongs to the type-I 3-dehydroquinase family. In the C-terminal section; belongs to the shikimate dehydrogenase family. In terms of assembly, homodimer. It depends on Zn(2+) as a cofactor.

The protein localises to the cytoplasm. It catalyses the reaction 7-phospho-2-dehydro-3-deoxy-D-arabino-heptonate = 3-dehydroquinate + phosphate. The catalysed reaction is 3-dehydroquinate = 3-dehydroshikimate + H2O. It carries out the reaction shikimate + NADP(+) = 3-dehydroshikimate + NADPH + H(+). The enzyme catalyses shikimate + ATP = 3-phosphoshikimate + ADP + H(+). It catalyses the reaction 3-phosphoshikimate + phosphoenolpyruvate = 5-O-(1-carboxyvinyl)-3-phosphoshikimate + phosphate. Its pathway is metabolic intermediate biosynthesis; chorismate biosynthesis; chorismate from D-erythrose 4-phosphate and phosphoenolpyruvate: step 2/7. It functions in the pathway metabolic intermediate biosynthesis; chorismate biosynthesis; chorismate from D-erythrose 4-phosphate and phosphoenolpyruvate: step 3/7. It participates in metabolic intermediate biosynthesis; chorismate biosynthesis; chorismate from D-erythrose 4-phosphate and phosphoenolpyruvate: step 4/7. The protein operates within metabolic intermediate biosynthesis; chorismate biosynthesis; chorismate from D-erythrose 4-phosphate and phosphoenolpyruvate: step 5/7. Its pathway is metabolic intermediate biosynthesis; chorismate biosynthesis; chorismate from D-erythrose 4-phosphate and phosphoenolpyruvate: step 6/7. The AROM polypeptide catalyzes 5 consecutive enzymatic reactions in prechorismate polyaromatic amino acid biosynthesis. This Coprinopsis cinerea (strain Okayama-7 / 130 / ATCC MYA-4618 / FGSC 9003) (Inky cap fungus) protein is Pentafunctional AROM polypeptide.